A 212-amino-acid chain; its full sequence is Dephospho-CoA kinase (212 aa).

Residues 3–207 (IIGLTGGIAS…RHLADDPEPG (205 aa)) form the DPCK domain. 11 to 16 (ASGKST) serves as a coordination point for ATP.

This sequence belongs to the CoaE family.

It localises to the cytoplasm. The enzyme catalyses 3'-dephospho-CoA + ATP = ADP + CoA + H(+). It participates in cofactor biosynthesis; coenzyme A biosynthesis; CoA from (R)-pantothenate: step 5/5. Functionally, catalyzes the phosphorylation of the 3'-hydroxyl group of dephosphocoenzyme A to form coenzyme A. In Moorella thermoacetica (strain ATCC 39073 / JCM 9320), this protein is Dephospho-CoA kinase.